Reading from the N-terminus, the 1860-residue chain is Golgi-specific brefeldin A-resistance guanine nucleotide exchange factor 1 (1860 aa).

The tract at residues 1 to 211 (MVDKNIYIIQ…EPKNYVGTNM (211 aa)) is DCB; DCB:DCB domain and DCB:HUS domain interaction. Residues 1 to 381 (MVDKNIYIIQ…SVHDMDYVNP (381 aa)) are interaction with RAB1B. Disordered stretches follow at residues 215-266 (KMRA…GGMP) and 281-372 (AASA…DSAS). The span at 227 to 241 (WKKQKRSPRPPRHMT) shows a compositional bias: basic residues. Composition is skewed to polar residues over residues 250 to 262 (PTPN…SNLT), 290 to 301 (TDSGLEFSSQTT), and 335 to 351 (DLQQ…SASV). Phosphoserine is present on residues Ser350 and Ser353. Thr508 is modified (phosphothreonine). The HUS; DCB:HUS domain interaction stretch occupies residues 531 to 551 (RIPSFVTELYINYDCDYYCSN). The segment covering 620-631 (TREASNTERTAS) has biased composition (basic and acidic residues). The interval 620 to 666 (TREASNTERTASDGKAVGMASDIPGLHLPGGGRLPPEHGKSGCSDLE) is disordered. Ser663 is modified (phosphoserine). The region spanning 693–883 (ELIEIKNKKK…EDMYHAIKNE (191 aa)) is the SEC7 domain. The segment at 887 to 1371 (MPEEQTGLVR…PSRPGPSPLI (485 aa)) is phosphatidylinositol-phosphate binding; required for translocation to the leading edge and for ARF1 activation upon GPCR signaling. The segment covering 1285–1297 (QATARADAPDAGA) has biased composition (low complexity). The tract at residues 1285-1336 (QATARADAPDAGAQSDSELPSYHQNDVSLDRGYTSDSEVYTDHGRPGKIHRS) is disordered. The segment covering 1298 to 1311 (QSDSELPSYHQNDV) has biased composition (polar residues). Position 1299 is a phosphoserine (Ser1299). The residue at position 1317 (Tyr1317) is a Phosphotyrosine. Residues Ser1319, Ser1321, and Ser1336 each carry the phosphoserine modification. Thr1338 is modified (phosphothreonine; by AMPK). 3 disordered regions span residues 1351-1371 (GKDD…SPLI), 1431-1484 (CKSQ…DEGV), and 1726-1809 (PMPM…QPPL). A compositionally biased stretch (basic and acidic residues) spans 1433–1447 (SQEKRGKSHKYDSKG). Polar residues predominate over residues 1465–1474 (TSSQHASRGG). Phosphoserine is present on residues Ser1476, Ser1774, and Ser1785. Over residues 1775–1792 (PRAASSSSPGSPVASSPS) the composition is skewed to low complexity.

Can form homodimers and probably homotetramers. Interacts with COPG1; the interaction is independent of ARF1 activation. Interacts with ARF1, ARF3, ARF4 and ARF5. Interacts with RAB1B (GTP-bound form); required for GBF1 membrane association. Interacts with GGA1, GGA2 and GGA3. Interacts with USO1. Interacts (via SEC7 domain) with PNPLA2 (via C-terminus); the interaction is direct. Interacts with ARMH3. As to quaternary structure, (Microbial infection) Interacts with poliovirus protein 3A. In terms of processing, AMPK-mediated phosphorylation at Thr-1338 is induced by 2-deoxyglucose (2-DG) and AICA ribonucleotide, and occurs during mitosis leading to membrane disassociation and inactivation of ARF1 during mitosis. In terms of tissue distribution, ubiquitous.

It is found in the golgi apparatus. The protein localises to the cis-Golgi network. The protein resides in the endoplasmic reticulum-Golgi intermediate compartment. Its subcellular location is the trans-Golgi network. It localises to the cytoplasm. It is found in the lipid droplet. The protein localises to the membrane. With respect to regulation, inhibited by brefeldin A (BFA). Inhibited by golgicide A (GCA). In terms of biological role, guanine-nucleotide exchange factor (GEF) for members of the Arf family of small GTPases involved in trafficking in the early secretory pathway; its GEF activity initiates the coating of nascent vesicles via the localized generation of activated ARFs through replacement of GDP with GTP. Recruitment to cis-Golgi membranes requires membrane association of Arf-GDP and can be regulated by ARF1, ARF3, ARF4 and ARF5. Involved in the recruitment of the COPI coat complex to the endoplasmic reticulum exit sites (ERES), and the endoplasmic reticulum-Golgi intermediate (ERGIC) and cis-Golgi compartments which implicates ARF1 activation. Involved in COPI vesicle-dependent retrograde transport from the ERGIC and cis-Golgi compartments to the endoplasmic reticulum (ER). Involved in the trans-Golgi network recruitment of GGA1, GGA2, GGA3, BIG1, BIG2, and the AP-1 adaptor protein complex related to chlathrin-dependent transport; the function requires its GEF activity (probably at least in part on ARF4 and ARF5). Has GEF activity towards ARF1. Has in vitro GEF activity towards ARF5. Involved in the processing of PSAP. Required for the assembly of the Golgi apparatus. The AMPK-phosphorylated form is involved in Golgi disassembly during mitotis and under stress conditions. May be involved in the COPI vesicle-dependent recruitment of PNPLA2 to lipid droplets; however, this function is under debate. In neutrophils, involved in G protein-coupled receptor (GPCR)-mediated chemotaxis und superoxide production. Proposed to be recruited by phosphatidylinositol-phosphates generated upon GPCR stimulation to the leading edge where it recruits and activates ARF1, and is involved in recruitment of GIT2 and the NADPH oxidase complex. Plays a role in maintaining mitochondrial morphology. This is Golgi-specific brefeldin A-resistance guanine nucleotide exchange factor 1 (GBF1) from Homo sapiens (Human).